A 357-amino-acid chain; its full sequence is Phosphoserine aminotransferase (357 aa).

Arg-41 is a binding site for L-glutamate. Pyridoxal 5'-phosphate is bound by residues 75-76 (GT), Trp-100, Thr-150, Asp-170, and Gln-193. Lys-194 is modified (N6-(pyridoxal phosphate)lysine). Position 234–235 (234–235 (NT)) interacts with pyridoxal 5'-phosphate.

It belongs to the class-V pyridoxal-phosphate-dependent aminotransferase family. SerC subfamily. As to quaternary structure, homodimer. It depends on pyridoxal 5'-phosphate as a cofactor.

It localises to the cytoplasm. The catalysed reaction is O-phospho-L-serine + 2-oxoglutarate = 3-phosphooxypyruvate + L-glutamate. The enzyme catalyses 4-(phosphooxy)-L-threonine + 2-oxoglutarate = (R)-3-hydroxy-2-oxo-4-phosphooxybutanoate + L-glutamate. It participates in amino-acid biosynthesis; L-serine biosynthesis; L-serine from 3-phospho-D-glycerate: step 2/3. In terms of biological role, catalyzes the reversible conversion of 3-phosphohydroxypyruvate to phosphoserine and of 3-hydroxy-2-oxo-4-phosphonooxybutanoate to phosphohydroxythreonine. The protein is Phosphoserine aminotransferase of Lactiplantibacillus plantarum (strain ATCC BAA-793 / NCIMB 8826 / WCFS1) (Lactobacillus plantarum).